A 387-amino-acid chain; its full sequence is Chorismate synthase (387 aa).

Positions 39 and 45 each coordinate NADP(+). The disordered stretch occupies residues 92 to 113; the sequence is PVEEGSEEKRRVSRPRPGHADL. Residues 130–132, 250–251, glycine 295, 310–314, and arginine 336 contribute to the FMN site; these read RSS, QA, and KPIPT.

Belongs to the chorismate synthase family. Homotetramer. The cofactor is FMNH2.

The catalysed reaction is 5-O-(1-carboxyvinyl)-3-phosphoshikimate = chorismate + phosphate. Its pathway is metabolic intermediate biosynthesis; chorismate biosynthesis; chorismate from D-erythrose 4-phosphate and phosphoenolpyruvate: step 7/7. Catalyzes the anti-1,4-elimination of the C-3 phosphate and the C-6 proR hydrogen from 5-enolpyruvylshikimate-3-phosphate (EPSP) to yield chorismate, which is the branch point compound that serves as the starting substrate for the three terminal pathways of aromatic amino acid biosynthesis. This reaction introduces a second double bond into the aromatic ring system. In Brevibacillus brevis (strain 47 / JCM 6285 / NBRC 100599), this protein is Chorismate synthase.